The primary structure comprises 415 residues: Dynein assembly factor with WD repeat domains 1 (415 aa).

WD repeat units follow at residues 90–129 (AHILPLTNVALNKSGSCFITGSYDRTCKLWDTASGEELNT), 132–174 (GHRN…HTFR), 175–214 (GHTAEIVCLSFNPQSTLVATGSMDTTAKLWNIQNGEEVCT), 217–256 (GHSAEIISLSFNTSGDRIITGSFDHTVVVWDADTGGKVNI), 259–298 (GHCAEISSALFNWDCSLILTGSMDKTCMLWDATNGKCVAT), 301–340 (GHDDEILDSCFDYTGKLIATASADGTARIFSAATRKCIAK), 343–384 (GHEG…QVLE), and 386–415 (HTDEIFSCTFNYKGNIVITGSKDNTCRIWR).

The protein belongs to the WD repeat WDR69 family. Interacts with IFT46.

Its subcellular location is the cytoplasm. The protein localises to the cytoskeleton. The protein resides in the flagellum basal body. It localises to the flagellum axoneme. Functionally, required for axonemal dynein assembly and ciliary motility in ciliated organs, including Kupffer's vesicle, during embryogenesis. Facilitates the onset of robust cilia motility during development. This Macaca fascicularis (Crab-eating macaque) protein is Dynein assembly factor with WD repeat domains 1 (DAW1).